The following is a 325-amino-acid chain: 4-hydroxy-3-methylbut-2-enyl diphosphate reductase (325 aa).

Cys-21 lines the [4Fe-4S] cluster pocket. (2E)-4-hydroxy-3-methylbut-2-enyl diphosphate contacts are provided by His-50 and His-83. Dimethylallyl diphosphate contacts are provided by His-50 and His-83. Positions 50 and 83 each coordinate isopentenyl diphosphate. Cys-105 lines the [4Fe-4S] cluster pocket. (2E)-4-hydroxy-3-methylbut-2-enyl diphosphate is bound at residue His-133. His-133 provides a ligand contact to dimethylallyl diphosphate. His-133 is an isopentenyl diphosphate binding site. Catalysis depends on Glu-135, which acts as the Proton donor. Thr-173 contacts (2E)-4-hydroxy-3-methylbut-2-enyl diphosphate. A [4Fe-4S] cluster-binding site is contributed by Cys-203. (2E)-4-hydroxy-3-methylbut-2-enyl diphosphate is bound by residues Ser-231, Ser-232, Asn-233, and Ser-275. Positions 231, 232, 233, and 275 each coordinate dimethylallyl diphosphate. Residues Ser-231, Ser-232, Asn-233, and Ser-275 each coordinate isopentenyl diphosphate.

Belongs to the IspH family. Requires [4Fe-4S] cluster as cofactor.

The catalysed reaction is isopentenyl diphosphate + 2 oxidized [2Fe-2S]-[ferredoxin] + H2O = (2E)-4-hydroxy-3-methylbut-2-enyl diphosphate + 2 reduced [2Fe-2S]-[ferredoxin] + 2 H(+). It carries out the reaction dimethylallyl diphosphate + 2 oxidized [2Fe-2S]-[ferredoxin] + H2O = (2E)-4-hydroxy-3-methylbut-2-enyl diphosphate + 2 reduced [2Fe-2S]-[ferredoxin] + 2 H(+). It functions in the pathway isoprenoid biosynthesis; dimethylallyl diphosphate biosynthesis; dimethylallyl diphosphate from (2E)-4-hydroxy-3-methylbutenyl diphosphate: step 1/1. Its pathway is isoprenoid biosynthesis; isopentenyl diphosphate biosynthesis via DXP pathway; isopentenyl diphosphate from 1-deoxy-D-xylulose 5-phosphate: step 6/6. In terms of biological role, catalyzes the conversion of 1-hydroxy-2-methyl-2-(E)-butenyl 4-diphosphate (HMBPP) into a mixture of isopentenyl diphosphate (IPP) and dimethylallyl diphosphate (DMAPP). Acts in the terminal step of the DOXP/MEP pathway for isoprenoid precursor biosynthesis. In Bordetella pertussis (strain Tohama I / ATCC BAA-589 / NCTC 13251), this protein is 4-hydroxy-3-methylbut-2-enyl diphosphate reductase.